Consider the following 78-residue polypeptide: Beta-defensin 29 (78 aa).

The N-terminal stretch at 1 to 23 (MPVTKSYFMTVVVVLILVDETTG) is a signal peptide. Disulfide bonds link Cys-40–Cys-67, Cys-47–Cys-61, and Cys-51–Cys-68.

This sequence belongs to the beta-defensin family. As to expression, highly expressed in the cauda epididymis.

Its subcellular location is the secreted. Functionally, has antibacterial activity. The polypeptide is Beta-defensin 29 (Defb29) (Mus musculus (Mouse)).